We begin with the raw amino-acid sequence, 549 residues long: Glucose-6-phosphate isomerase (549 aa).

Glutamate 355 serves as the catalytic Proton donor. Catalysis depends on residues histidine 386 and lysine 514.

It belongs to the GPI family.

It is found in the cytoplasm. The catalysed reaction is alpha-D-glucose 6-phosphate = beta-D-fructose 6-phosphate. It functions in the pathway carbohydrate biosynthesis; gluconeogenesis. It participates in carbohydrate degradation; glycolysis; D-glyceraldehyde 3-phosphate and glycerone phosphate from D-glucose: step 2/4. In terms of biological role, catalyzes the reversible isomerization of glucose-6-phosphate to fructose-6-phosphate. This is Glucose-6-phosphate isomerase from Cronobacter sakazakii (strain ATCC BAA-894) (Enterobacter sakazakii).